The following is a 427-amino-acid chain: Transcobalamin-2 (427 aa).

Positions 1 to 18 are cleaved as a signal peptide; that stretch reads MRHLGAFLFLLGVLGALT. 4 disulfide bridges follow: C21–C267, C83–C96, C116–C309, and C165–C205. Cob(II)alamin-binding positions include Q104, 152 to 156, H190, 190 to 194, N242, S245, Q291, and 395 to 397; these read TSYYQ, HHSVD, and WQL.

This sequence belongs to the eukaryotic cobalamin transport proteins family. As to quaternary structure, interacts with CD320 (via LDL-receptor class A domains).

The protein localises to the secreted. Its function is as follows. Primary vitamin B12-binding and transport protein. Delivers cobalamin to cells. This is Transcobalamin-2 (TCN2) from Homo sapiens (Human).